We begin with the raw amino-acid sequence, 394 residues long: Glycerol-3-phosphate dehydrogenase [NAD(+)] 2 (394 aa).

NAD(+) contacts are provided by residues 41-46 (GSGNWG), Lys152, and Ala185. A substrate-binding site is contributed by Lys152. Lys243 (proton acceptor) is an active-site residue. Positions 308 and 337 each coordinate NAD(+). 308-309 (RN) is a binding site for substrate.

This sequence belongs to the NAD-dependent glycerol-3-phosphate dehydrogenase family.

The catalysed reaction is sn-glycerol 3-phosphate + NAD(+) = dihydroxyacetone phosphate + NADH + H(+). The sequence is that of Glycerol-3-phosphate dehydrogenase [NAD(+)] 2 (gpd2) from Cyberlindnera jadinii (Torula yeast).